We begin with the raw amino-acid sequence, 322 residues long: Breast cancer metastasis-suppressor 1-like protein (322 aa).

The span at 1–16 (MPVHSREKKESNHNDM) shows a compositional bias: basic and acidic residues. The tract at residues 1 to 56 (MPVHSREKKESNHNDMEVDYPENEGSSSEEDDSDSSSGSEEGDSSEMDDEDCERRR) is disordered. Over residues 17 to 51 (EVDYPENEGSSSEEDDSDSSSGSEEGDSSEMDDED) the composition is skewed to acidic residues. Coiled coils occupy residues 50-99 (EDCE…QAQE) and 147-178 (EKLL…ITSE).

The protein belongs to the BRMS1 family.

It localises to the nucleus. Its function is as follows. Involved in the histone deacetylase (HDAC1)-dependent transcriptional repression activity. This chain is Breast cancer metastasis-suppressor 1-like protein (brms1l), found in Xenopus laevis (African clawed frog).